The sequence spans 423 residues: Elongation factor 1-alpha (423 aa).

One can recognise a tr-type G domain in the interval 5-211 (KEHINLAFIG…DNLEPPEKPT (207 aa)). The interval 14-21 (GHVDHGKS) is G1. 14-21 (GHVDHGKS) contributes to the GTP binding site. Residue S21 coordinates Mg(2+). The segment at 60–64 (GVTID) is G2. A G3 region spans residues 81–84 (DCPG). GTP contacts are provided by residues 81-85 (DCPGH) and 136-139 (NKMD). Positions 136–139 (NKMD) are G4. The segment at 175–177 (SAF) is G5.

The protein belongs to the TRAFAC class translation factor GTPase superfamily. Classic translation factor GTPase family. EF-Tu/EF-1A subfamily.

Its subcellular location is the cytoplasm. The catalysed reaction is GTP + H2O = GDP + phosphate + H(+). GTP hydrolase that promotes the GTP-dependent binding of aminoacyl-tRNA to the A-site of ribosomes during protein biosynthesis. This chain is Elongation factor 1-alpha, found in Methanopyrus kandleri (strain AV19 / DSM 6324 / JCM 9639 / NBRC 100938).